The following is a 40-amino-acid chain: Dolichyl-diphosphooligosaccharide--protein glycosyltransferase subunit 4 (40 aa).

Over 1–4 (MITD) the chain is Lumenal. The chain crosses the membrane as a helical span at residues 5–25 (VQLAIFSNVLGVFLFLLVVAY). The Cytoplasmic portion of the chain corresponds to 26 to 40 (HYINANTGKPIPKAK).

The protein belongs to the OST4 family. As to quaternary structure, component of the oligosaccharyltransferase (OST) complex.

The protein resides in the endoplasmic reticulum membrane. Subunit of the oligosaccharyl transferase (OST) complex that catalyzes the initial transfer of a defined glycan (Glc(3)Man(9)GlcNAc(2) in eukaryotes) from the lipid carrier dolichol-pyrophosphate to an asparagine residue within an Asn-X-Ser/Thr consensus motif in nascent polypeptide chains, the first step in protein N-glycosylation. N-glycosylation occurs cotranslationally and the complex associates with the Sec61 complex at the channel-forming translocon complex that mediates protein translocation across the endoplasmic reticulum (ER). All subunits are required for a maximal enzyme activity. The chain is Dolichyl-diphosphooligosaccharide--protein glycosyltransferase subunit 4 from Drosophila ananassae (Fruit fly).